The sequence spans 219 residues: Large ribosomal subunit protein uL1 (219 aa).

It belongs to the universal ribosomal protein uL1 family. In terms of assembly, part of the 50S ribosomal subunit.

Its function is as follows. Binds directly to 23S rRNA. Probably involved in E site tRNA release. In terms of biological role, protein L1 is also a translational repressor protein, it controls the translation of its operon by binding to its mRNA. This Pyrococcus abyssi (strain GE5 / Orsay) protein is Large ribosomal subunit protein uL1.